We begin with the raw amino-acid sequence, 516 residues long: Potassium voltage-gated channel subfamily A member 10 (516 aa).

A helical membrane pass occupies residues 223–244; the sequence is VALVSVLVIVISIIIFCMETLP. An N-linked (GlcNAc...) asparagine glycan is attached at N261. Residues 276-296 form a helical membrane-spanning segment; sequence FFVIETACIIWFSFELFVRFI. Residues 308-328 traverse the membrane as a helical segment; the sequence is IMNIIDIVSIIPYFVTLTTEL. An N-linked (GlcNAc...) asparagine glycan is attached at N339. Residues 344–363 traverse the membrane as a helical; Voltage-sensor segment; the sequence is ILRIIRLVRVFRIFKLSRHS. Residues 380 to 400 traverse the membrane as a helical segment; the sequence is LGLLIFFLFIGVILFSSAVYF. The Selectivity filter signature appears at 426–431; the sequence is TVGYGD. The helical transmembrane segment at 441–461 threads the bilayer; that stretch reads IVGTLCAIAGVLTIALPVPVI. N503 carries N-linked (GlcNAc...) asparagine glycosylation.

This sequence belongs to the potassium channel family. A (Shaker) (TC 1.A.1.2) subfamily. Kv1.8/KCNA10 sub-subfamily. As to quaternary structure, homotetramer. Detected in brain, cochlear sensory epithelium, cochlear ganglion, tegumentum vasculosum. Detected at low levels in cochlear lagena.

It localises to the membrane. The enzyme catalyses K(+)(in) = K(+)(out). Its activity is regulated as follows. The channel activity is up-regulated by cAMP. In terms of biological role, voltage-gated potassium ion channel that mediates K(+) permeability of excitable membranes. When opened in response to the voltage difference across the membrane, KCNA10 channel selectively allows the flow of potassium ions across the membrane down their electrochemical gradient. The sequence is that of Potassium voltage-gated channel subfamily A member 10 (KCNA10) from Gallus gallus (Chicken).